Here is a 1620-residue protein sequence, read N- to C-terminus: ABC-type organic anion transporter ABCA8A (1620 aa).

7 helical membrane-spanning segments follow: residues 30–50 (TFLEFLYTALILLSLILFLQL), 224–244 (CFLFFCIIRFSPLTYYISAGV), 263–283 (SAFWLSWGLLYGVIVFVVTLL), 294–314 (VFLTGFMVIFSLFFFYGLSLI), 328–348 (FLTDLVVFLLTVSCGSLGFTA), 357–377 (LEWLLSLLSPFAFMLGMVQLL), and 397–417 (IGTIFMLFFDGVFYLLLTFYF). Asn454 and Asn482 each carry an N-linked (GlcNAc...) asparagine glycan. Residues 478-713 (IRIRNLTKDY…WGIGYHLSLQ (236 aa)) enclose the ABC transporter 1 domain. Position 514 to 521 (514 to 521 (GHSGAGKS)) interacts with ATP. The helical transmembrane segment at 861–881 (IVILILVLGIGLLHILSANIY) threads the bilayer. Asn967 carries an N-linked (GlcNAc...) asparagine glycan. The next 7 membrane-spanning stretches (helical) occupy residues 979–999 (CFPVLVDIVSNGLLGLFAPSA), 1019–1039 (YLAYFFLWVLLMACVPPYISM), 1068–1088 (ALFEVPVYCALILSIFIAFYA), 1105–1125 (ILYVGGYAMSVIFMTYVISFI), 1133–1153 (SGLWSLCFYIVSFFSMCFMLI), 1159–1179 (ISLFVLIALVPPATLGGCTLL), and 1196–1216 (EYSYLFFLAPLLHFAIFVVIL). Residues 1284–1517 (LRKEYKGKKK…FGKEYLLEMK (234 aa)) enclose the ABC transporter 2 domain. Residue 1322-1329 (GHNGAGKS) participates in ATP binding.

Belongs to the ABC transporter superfamily. ABCA family. As to expression, expressed in lung, heart, liver, skeletal muscle and testis. Highly expressed in the liver, and is also abundant in heart and skeletal muscle. Highly expressed in heart.

It is found in the cell membrane. It localises to the basolateral cell membrane. It carries out the reaction taurocholate(in) + ATP + H2O = taurocholate(out) + ADP + phosphate + H(+). The enzyme catalyses cholesterol(in) + ATP + H2O = cholesterol(out) + ADP + phosphate + H(+). With respect to regulation, cholesterol efflux is increased by extracellularly applied taurocholate. Functionally, mediates cholesterol and taurocholate efflux. Through the interaction with ABCA1 potentiates the cholesterol efflux to lipid-free APOA1, in turn regulates high-density lipoprotein cholesterol levels. This chain is ABC-type organic anion transporter ABCA8A, found in Mus musculus (Mouse).